A 220-amino-acid polypeptide reads, in one-letter code: Probable septum site-determining protein MinC (220 aa).

This sequence belongs to the MinC family. Interacts with MinD and FtsZ.

Functionally, cell division inhibitor that blocks the formation of polar Z ring septums. Rapidly oscillates between the poles of the cell to destabilize FtsZ filaments that have formed before they mature into polar Z rings. Prevents FtsZ polymerization. This is Probable septum site-determining protein MinC from Vibrio vulnificus (strain CMCP6).